The chain runs to 326 residues: Undecaprenyl-phosphate 4-deoxy-4-formamido-L-arabinose transferase (326 aa).

The next 2 helical transmembrane spans lie at 234 to 254 (LLSIVGSVVAGIGFTFSILLI) and 269 to 289 (VFTLFAILFTFVGVQLLGMGL).

The protein belongs to the glycosyltransferase 2 family.

It localises to the cell inner membrane. It carries out the reaction UDP-4-deoxy-4-formamido-beta-L-arabinose + di-trans,octa-cis-undecaprenyl phosphate = 4-deoxy-4-formamido-alpha-L-arabinopyranosyl di-trans,octa-cis-undecaprenyl phosphate + UDP. Its pathway is glycolipid biosynthesis; 4-amino-4-deoxy-alpha-L-arabinose undecaprenyl phosphate biosynthesis; 4-amino-4-deoxy-alpha-L-arabinose undecaprenyl phosphate from UDP-4-deoxy-4-formamido-beta-L-arabinose and undecaprenyl phosphate: step 1/2. The protein operates within bacterial outer membrane biogenesis; lipopolysaccharide biosynthesis. Catalyzes the transfer of 4-deoxy-4-formamido-L-arabinose from UDP to undecaprenyl phosphate. The modified arabinose is attached to lipid A and is required for resistance to polymyxin and cationic antimicrobial peptides. The sequence is that of Undecaprenyl-phosphate 4-deoxy-4-formamido-L-arabinose transferase from Aeromonas hydrophila subsp. hydrophila (strain ATCC 7966 / DSM 30187 / BCRC 13018 / CCUG 14551 / JCM 1027 / KCTC 2358 / NCIMB 9240 / NCTC 8049).